We begin with the raw amino-acid sequence, 115 residues long: Phosphoribosyl-AMP cyclohydrolase (115 aa).

Aspartate 80 contacts Mg(2+). Cysteine 81 lines the Zn(2+) pocket. Residues aspartate 82 and aspartate 84 each contribute to the Mg(2+) site. The Zn(2+) site is built by cysteine 97 and cysteine 104.

The protein belongs to the PRA-CH family. As to quaternary structure, homodimer. It depends on Mg(2+) as a cofactor. Zn(2+) serves as cofactor.

The protein localises to the cytoplasm. It catalyses the reaction 1-(5-phospho-beta-D-ribosyl)-5'-AMP + H2O = 1-(5-phospho-beta-D-ribosyl)-5-[(5-phospho-beta-D-ribosylamino)methylideneamino]imidazole-4-carboxamide. It functions in the pathway amino-acid biosynthesis; L-histidine biosynthesis; L-histidine from 5-phospho-alpha-D-ribose 1-diphosphate: step 3/9. Its function is as follows. Catalyzes the hydrolysis of the adenine ring of phosphoribosyl-AMP. This chain is Phosphoribosyl-AMP cyclohydrolase, found in Mycolicibacterium smegmatis (strain ATCC 700084 / mc(2)155) (Mycobacterium smegmatis).